The sequence spans 74 residues: Salivary glue protein Sgs-7 (74 aa).

An N-terminal signal peptide occupies residues 1-23; the sequence is MKLIAVTIIACILLIGFSDLALG.

This Drosophila melanogaster (Fruit fly) protein is Salivary glue protein Sgs-7 (Sgs7).